The chain runs to 527 residues: Splicing factor MUD2 (527 aa).

Residues 36–169 (DNAVIDTHFK…SKFNGDRDKR (134 aa)) form a disordered region. A compositionally biased stretch (basic and acidic residues) spans 42–55 (THFKRQKSDGELPK). The residue at position 49 (Ser-49) is a Phosphoserine. Residues 60 to 85 (RNVSHSNNRGPSSIITMSTNRTTYEQ) show a composition bias toward polar residues. Residues 94 to 109 (SYRDASGRSYNRENRY) show a composition bias toward basic and acidic residues. A compositionally biased stretch (polar residues) spans 110–122 (SSHNTGPQWNNNP). 2 stretches are compositionally biased toward basic and acidic residues: residues 125–141 (RQRDERRGRNERFDRRG) and 155–169 (RKNEGSKFNGDRDKR). Residues 424-511 (LLLLNCLDPL…QFNDRTVLCT (88 aa)) enclose the RRM domain.

MSL5, MUD2 and PRP40 interact to form the commitment complex 2 (CC2), a precursor of mature spliceosomes.

In terms of biological role, splicing factor that contacts pre-mRNA directly and is a component of the pre-mRNA-U1 snRNP complex (commitment complex 2) that forms during early spliceosome assembly in yeast extracts. This chain is Splicing factor MUD2 (MUD2), found in Saccharomyces cerevisiae (strain ATCC 204508 / S288c) (Baker's yeast).